We begin with the raw amino-acid sequence, 333 residues long: Adenosine deaminase (333 aa).

Residues His-12 and His-14 each coordinate Zn(2+). The substrate site is built by His-14, Asp-16, and Gly-170. His-197 contributes to the Zn(2+) binding site. The Proton donor role is filled by Glu-200. Zn(2+) is bound at residue Asp-278. Asp-279 contacts substrate.

This sequence belongs to the metallo-dependent hydrolases superfamily. Adenosine and AMP deaminases family. Adenosine deaminase subfamily. Requires Zn(2+) as cofactor.

It carries out the reaction adenosine + H2O + H(+) = inosine + NH4(+). The enzyme catalyses 2'-deoxyadenosine + H2O + H(+) = 2'-deoxyinosine + NH4(+). Its function is as follows. Catalyzes the hydrolytic deamination of adenosine and 2-deoxyadenosine. The protein is Adenosine deaminase of Salmonella gallinarum (strain 287/91 / NCTC 13346).